Here is a 336-residue protein sequence, read N- to C-terminus: Phosphate acyltransferase (336 aa).

This sequence belongs to the PlsX family. As to quaternary structure, homodimer. Probably interacts with PlsY.

It is found in the cytoplasm. It catalyses the reaction a fatty acyl-[ACP] + phosphate = an acyl phosphate + holo-[ACP]. The protein operates within lipid metabolism; phospholipid metabolism. In terms of biological role, catalyzes the reversible formation of acyl-phosphate (acyl-PO(4)) from acyl-[acyl-carrier-protein] (acyl-ACP). This enzyme utilizes acyl-ACP as fatty acyl donor, but not acyl-CoA. The sequence is that of Phosphate acyltransferase from Dictyoglomus thermophilum (strain ATCC 35947 / DSM 3960 / H-6-12).